Reading from the N-terminus, the 669-residue chain is Elongation factor G-like protein (669 aa).

In terms of domain architecture, tr-type G spans 7–279 (ESLRNVAIVG…VLIKEAPDPS (273 aa)). Positions 16 to 23 (GPYGSGKT) are G1. Position 16–23 (16–23 (GPYGSGKT)) interacts with GTP. The segment at 59–63 (QMSVE) is G2. The tract at residues 80 to 83 (DCPG) is G3. Residues 80–84 (DCPGS) and 134–137 (NKMD) contribute to the GTP site. Residues 134 to 137 (NKMD) form a G4 region. Residues 257-259 (AAE) are G5.

This sequence belongs to the TRAFAC class translation factor GTPase superfamily. Classic translation factor GTPase family. EF-G/EF-2 subfamily.

The sequence is that of Elongation factor G-like protein from Synechocystis sp. (strain ATCC 27184 / PCC 6803 / Kazusa).